Consider the following 68-residue polypeptide: Conotoxin Vx2 (68 aa).

Positions 1–20 are cleaved as a signal peptide; the sequence is MMSKLGVLVTICLLLFPLTA. Positions 21-47 are excised as a propeptide; that stretch reads LPLDGDQPADHPAKRTQDHNLASPISA. 3 cysteine pairs are disulfide-bonded: cysteine 55–cysteine 68, cysteine 56–cysteine 61, and cysteine 57–cysteine 65.

It belongs to the conotoxin M superfamily. In terms of tissue distribution, expressed by the venom duct.

Its subcellular location is the secreted. In vivo, elicits a series of symptoms, such as being sedative, tail stiffening and twisted jumping, when injected intracranially into mice. The chain is Conotoxin Vx2 from Conus vexillum (Flag cone).